We begin with the raw amino-acid sequence, 258 residues long: Phosphate import ATP-binding protein PstB 1 (258 aa).

Residues 5–247 (LDLTDVNIYY…EKIFSNPNQK (243 aa)) form the ABC transporter domain. 37–44 (GPSGCGKT) is a binding site for ATP.

It belongs to the ABC transporter superfamily. Phosphate importer (TC 3.A.1.7) family. As to quaternary structure, the complex is composed of two ATP-binding proteins (PstB), two transmembrane proteins (PstC and PstA) and a solute-binding protein (PstS).

It localises to the cell membrane. It catalyses the reaction phosphate(out) + ATP + H2O = ADP + 2 phosphate(in) + H(+). Its function is as follows. Part of the ABC transporter complex PstSACB involved in phosphate import. Responsible for energy coupling to the transport system. The protein is Phosphate import ATP-binding protein PstB 1 of Mycobacterium bovis (strain ATCC BAA-935 / AF2122/97).